The primary structure comprises 159 residues: 6,7-dimethyl-8-ribityllumazine synthase (159 aa).

5-amino-6-(D-ribitylamino)uracil is bound by residues tryptophan 27, 62 to 64, and 86 to 88; these read SWE and VLI. 91–92 is a binding site for (2S)-2-hydroxy-3-oxobutyl phosphate; that stretch reads ST. Catalysis depends on histidine 94, which acts as the Proton donor. Leucine 119 serves as a coordination point for 5-amino-6-(D-ribitylamino)uracil. Arginine 133 is a (2S)-2-hydroxy-3-oxobutyl phosphate binding site.

Homopentamer.

The catalysed reaction is (2S)-2-hydroxy-3-oxobutyl phosphate + 5-amino-6-(D-ribitylamino)uracil = 6,7-dimethyl-8-(1-D-ribityl)lumazine + phosphate + 2 H2O + H(+). The protein operates within cofactor biosynthesis; riboflavin biosynthesis; riboflavin from 2-hydroxy-3-oxobutyl phosphate and 5-amino-6-(D-ribitylamino)uracil: step 1/2. With respect to regulation, competitively inhibited by riboflavin (Ki of 17 uM). Its function is as follows. Catalyzes the formation of 6,7-dimethyl-8-ribityllumazine by condensation of 5-amino-6-(D-ribitylamino)uracil with 3,4-dihydroxy-2-butanone 4-phosphate. This is the penultimate step in the biosynthesis of riboflavin. Also binds riboflavin with an unexpected high affinity. This Schizosaccharomyces pombe (strain 972 / ATCC 24843) (Fission yeast) protein is 6,7-dimethyl-8-ribityllumazine synthase (rib4).